Consider the following 337-residue polypeptide: DNA-directed RNA polymerase subunit alpha (337 aa).

The alpha N-terminal domain (alpha-NTD) stretch occupies residues 1–233 (MIQKNWQELI…DQLALFINFK (233 aa)). The segment at 249 to 337 (FNPALLKKVD…DLAKRYEDQY (89 aa)) is alpha C-terminal domain (alpha-CTD).

The protein belongs to the RNA polymerase alpha chain family. As to quaternary structure, homodimer. The RNAP catalytic core consists of 2 alpha, 1 beta, 1 beta' and 1 omega subunit. When a sigma factor is associated with the core the holoenzyme is formed, which can initiate transcription.

The catalysed reaction is RNA(n) + a ribonucleoside 5'-triphosphate = RNA(n+1) + diphosphate. DNA-dependent RNA polymerase catalyzes the transcription of DNA into RNA using the four ribonucleoside triphosphates as substrates. This chain is DNA-directed RNA polymerase subunit alpha, found in Bartonella henselae (strain ATCC 49882 / DSM 28221 / CCUG 30454 / Houston 1) (Rochalimaea henselae).